Consider the following 443-residue polypeptide: ATP-dependent protease ATPase subunit HslU (443 aa).

Residues Ile-18, 60–65, Asp-256, Glu-321, and Arg-393 each bind ATP; that span reads GVGKTE.

Belongs to the ClpX chaperone family. HslU subfamily. As to quaternary structure, a double ring-shaped homohexamer of HslV is capped on each side by a ring-shaped HslU homohexamer. The assembly of the HslU/HslV complex is dependent on binding of ATP.

It is found in the cytoplasm. In terms of biological role, ATPase subunit of a proteasome-like degradation complex; this subunit has chaperone activity. The binding of ATP and its subsequent hydrolysis by HslU are essential for unfolding of protein substrates subsequently hydrolyzed by HslV. HslU recognizes the N-terminal part of its protein substrates and unfolds these before they are guided to HslV for hydrolysis. The chain is ATP-dependent protease ATPase subunit HslU from Tolumonas auensis (strain DSM 9187 / NBRC 110442 / TA 4).